Here is a 313-residue protein sequence, read N- to C-terminus: tRNA dimethylallyltransferase (313 aa).

Residue 10–17 participates in ATP binding; sequence GPTAVGKT. 12–17 is a substrate binding site; the sequence is TAVGKT. The interval 35–38 is interaction with substrate tRNA; it reads DSMQ.

It belongs to the IPP transferase family. As to quaternary structure, monomer. It depends on Mg(2+) as a cofactor.

The catalysed reaction is adenosine(37) in tRNA + dimethylallyl diphosphate = N(6)-dimethylallyladenosine(37) in tRNA + diphosphate. Functionally, catalyzes the transfer of a dimethylallyl group onto the adenine at position 37 in tRNAs that read codons beginning with uridine, leading to the formation of N6-(dimethylallyl)adenosine (i(6)A). In Alkaliphilus oremlandii (strain OhILAs) (Clostridium oremlandii (strain OhILAs)), this protein is tRNA dimethylallyltransferase.